A 146-amino-acid chain; its full sequence is VHLHGDEKAAVLALWDKVDEEKVGGEALGRLLVVYPWTQRFFDSFGDLSTAAAVMGNPKVKAHGKKVLHSFGEGVHHLDDLKVTFAQLSELHCDKLHVDPENFRLLGNVLVVVLAQQFGKAFTPELQAAYQKVVAGVASALAHKYH.

Residue valine 1 is modified to N-acetylvaline. The Globin domain maps to 2–146 (HLHGDEKAAV…VASALAHKYH (145 aa)). Position 17 is an N6-succinyllysine (lysine 17). Serine 44 is modified (phosphoserine). Lysine 59 carries the N6-succinyllysine modification. Positions 63 and 92 each coordinate heme b. Arginine 104 carries the post-translational modification Asymmetric dimethylarginine. Threonine 123 carries the post-translational modification Phosphothreonine.

This sequence belongs to the globin family. In terms of assembly, heterotetramer of two alpha chains and two beta chains. As to expression, red blood cells.

Involved in oxygen transport from the lung to the various peripheral tissues. The polypeptide is Hemoglobin subunit beta-2 (HBB2) (Tapirus terrestris (Lowland tapir)).